We begin with the raw amino-acid sequence, 1513 residues long: Lid2 complex component lid2 (1513 aa).

In terms of domain architecture, JmjN spans 56-97 (GLSVQLNASNMTDPFKFLLDNWHTIFKNGAIKLLPPEGWQIP). An ARID domain is found at 121-212 (YEKNYDYFKK…YIKPFERDSS (92 aa)). A disordered region spans residues 211-253 (SSPSFKSKRSESSTRKIRNTRSSAQQESPIPETSAQSPVQTIQ). Residues 230 to 253 (TRSSAQQESPIPETSAQSPVQTIQ) are compositionally biased toward polar residues. The PHD-type 1 zinc finger occupies 268–318 (GEQCEYCGLDKNPETILLCDGCEAAYHTSCLDPPLTSIPKEDWYCDACKFN). A JmjC domain is found at 408–574 (KYSSEPWNLH…DGLLNSSISV (167 aa)). Residue S722 is modified to Phosphoserine. The interval 1063–1086 (LSLNDRPGPPMEPASRETSPDSEG) is disordered. Positions 1076 to 1086 (ASRETSPDSEG) are enriched in basic and acidic residues. The PHD-type 2 zinc-finger motif lies at 1093 to 1145 (KKGCIFCFCRLPESGVMIECEICHEWYHAKCLKMSKKKLRQDEKFTCPICDYR). An RING-type 1; degenerate zinc finger spans residues 1096–1143 (CIFCFCRLPESGVMIECEICHEWYHAKCLKMSKKKLRQDEKFTCPICD). Disordered regions lie at residues 1244–1268 (APNP…RQRQ) and 1280–1327 (ASAI…NNKN). The span at 1257-1268 (TRKPRPTKRQRQ) shows a compositional bias: basic residues. Residues 1301-1313 (VEAETKSKSEKSP) show a composition bias toward basic and acidic residues. A compositionally biased stretch (polar residues) spans 1316–1326 (NGTNISDANNK). Residues 1352 to 1403 (NSSCLCGEEFSPRDSFIDCTICERRFHYDCVGLNNEIADSVSKFTCPICMEQ) form a PHD-type 3 zinc finger. An RING-type 2; degenerate zinc finger spans residues 1354 to 1401 (SCLCGEEFSPRDSFIDCTICERRFHYDCVGLNNEIADSVSKFTCPICM).

In terms of assembly, component of the Lid2 complex composed of ash2, jmj3, lid2, sdc1 and snt2.

It localises to the nucleus. The chain is Lid2 complex component lid2 (lid2) from Schizosaccharomyces pombe (strain 972 / ATCC 24843) (Fission yeast).